The primary structure comprises 190 residues: Elongation factor P 2 (190 aa).

The protein belongs to the elongation factor P family.

The protein localises to the cytoplasm. It participates in protein biosynthesis; polypeptide chain elongation. In terms of biological role, involved in peptide bond synthesis. Stimulates efficient translation and peptide-bond synthesis on native or reconstituted 70S ribosomes in vitro. Probably functions indirectly by altering the affinity of the ribosome for aminoacyl-tRNA, thus increasing their reactivity as acceptors for peptidyl transferase. This is Elongation factor P 2 (efp2) from Chlamydia pneumoniae (Chlamydophila pneumoniae).